The sequence spans 113 residues: Hydrogenase maturation factor HybF (113 aa).

Positions 2 and 3 each coordinate Ni(2+). Residues Cys73, Cys76, Cys89, and Cys92 each coordinate Zn(2+).

It belongs to the HypA/HybF family. HybF subfamily.

Functionally, involved in the maturation of [NiFe] hydrogenases. Required for nickel insertion into the metal center of the hydrogenase. In Escherichia coli O157:H7, this protein is Hydrogenase maturation factor HybF.